The sequence spans 633 residues: Beta-myrcene synthase TPS15CT (633 aa).

The N-terminal 55 residues, 1 to 55, are a transit peptide targeting the chloroplast; it reads MHCMAVHQFSPSIVSSLPTISTYNNNHFCRFFTPKTSISPISKTKSKSSTCYPIQ. 5 residues coordinate (2E)-geranyl diphosphate: Arg-344, Asp-381, Asp-385, Arg-525, and Asp-528. Mg(2+) contacts are provided by Asp-381 and Asp-385. Residues 381–385 carry the DDXXD motif motif; sequence DDIYD. Residues Asp-528, Thr-532, and Glu-536 each contribute to the Mg(2+) site.

It belongs to the terpene synthase family. Tpsb subfamily. The cofactor is Mg(2+). Mn(2+) is required as a cofactor.

It localises to the plastid. The protein localises to the chloroplast. It catalyses the reaction (2E)-geranyl diphosphate = beta-myrcene + diphosphate. The protein operates within secondary metabolite biosynthesis; terpenoid biosynthesis. Functionally, involved in monoterpene (C10) olefins biosynthesis, constituants of cannabinoids and terpenoids-rich resins. Catalyzes strictly the conversion of (2E)-geranyl diphosphate to beta-myrcene. This Cannabis sativa (Hemp) protein is Beta-myrcene synthase TPS15CT.